Here is a 697-residue protein sequence, read N- to C-terminus: uncharacterized protein (697 aa).

Positions 516 to 545 form a coiled coil; the sequence is ADQSQNDVVALSSRIDRLTQEVVALQNSEK.

This is an uncharacterized protein from Callospermophilus lateralis (Golden-mantled ground squirrel).